The sequence spans 288 residues: Light-independent protochlorophyllide reductase iron-sulfur ATP-binding protein (288 aa).

ATP contacts are provided by residues 12 to 17 (GIGKST) and lysine 41. Residue serine 16 participates in Mg(2+) binding. [4Fe-4S] cluster contacts are provided by cysteine 97 and cysteine 131. 182 to 183 (NR) provides a ligand contact to ATP.

The protein belongs to the NifH/BchL/ChlL family. In terms of assembly, homodimer. Protochlorophyllide reductase is composed of three subunits; ChlL, ChlN and ChlB. [4Fe-4S] cluster serves as cofactor.

The catalysed reaction is chlorophyllide a + oxidized 2[4Fe-4S]-[ferredoxin] + 2 ADP + 2 phosphate = protochlorophyllide a + reduced 2[4Fe-4S]-[ferredoxin] + 2 ATP + 2 H2O. It participates in porphyrin-containing compound metabolism; chlorophyll biosynthesis (light-independent). Component of the dark-operative protochlorophyllide reductase (DPOR) that uses Mg-ATP and reduced ferredoxin to reduce ring D of protochlorophyllide (Pchlide) to form chlorophyllide a (Chlide). This reaction is light-independent. The L component serves as a unique electron donor to the NB-component of the complex, and binds Mg-ATP. This is Light-independent protochlorophyllide reductase iron-sulfur ATP-binding protein from Picosynechococcus sp. (strain ATCC 27264 / PCC 7002 / PR-6) (Agmenellum quadruplicatum).